Consider the following 154-residue polypeptide: Large ribosomal subunit protein uL13 (154 aa).

This sequence belongs to the universal ribosomal protein uL13 family. Part of the 50S ribosomal subunit.

Its function is as follows. This protein is one of the early assembly proteins of the 50S ribosomal subunit, although it is not seen to bind rRNA by itself. It is important during the early stages of 50S assembly. This Bradyrhizobium sp. (strain BTAi1 / ATCC BAA-1182) protein is Large ribosomal subunit protein uL13.